An 873-amino-acid polypeptide reads, in one-letter code: Protein translocase subunit SecA (873 aa).

ATP-binding positions include Gln85, Gly103–Thr107, and Asp492. The segment covering Arg835 to Asp856 has biased composition (basic and acidic residues). Residues Arg835 to Ala873 form a disordered region. Zn(2+) is bound by residues Cys857, Cys859, Cys868, and Cys869. Over residues Lys863–Ala873 the composition is skewed to basic residues.

The protein belongs to the SecA family. As to quaternary structure, monomer and homodimer. Part of the essential Sec protein translocation apparatus which comprises SecA, SecYEG and auxiliary proteins SecDF. Other proteins may also be involved. Zn(2+) is required as a cofactor.

It is found in the cell membrane. It localises to the cytoplasm. The catalysed reaction is ATP + H2O + cellular proteinSide 1 = ADP + phosphate + cellular proteinSide 2.. Its function is as follows. Part of the Sec protein translocase complex. Interacts with the SecYEG preprotein conducting channel. Has a central role in coupling the hydrolysis of ATP to the transfer of proteins into and across the cell membrane, serving as an ATP-driven molecular motor driving the stepwise translocation of polypeptide chains across the membrane. This is Protein translocase subunit SecA from Desulforamulus reducens (strain ATCC BAA-1160 / DSM 100696 / MI-1) (Desulfotomaculum reducens).